Consider the following 202-residue polypeptide: Small ribosomal subunit protein uS5 (202 aa).

Positions 1–13 (MPGQQRRGGGSGG) are enriched in gly residues. The segment at 1 to 31 (MPGQQRRGGGSGGSDRRERRDRSGSGPAQEK) is disordered. Residues 14 to 23 (SDRRERRDRS) show a composition bias toward basic and acidic residues. Positions 34–97 (YVERVVAINR…EEAKKHFFKV (64 aa)) constitute an S5 DRBM domain.

The protein belongs to the universal ribosomal protein uS5 family. In terms of assembly, part of the 30S ribosomal subunit. Contacts proteins S4 and S8.

Functionally, with S4 and S12 plays an important role in translational accuracy. In terms of biological role, located at the back of the 30S subunit body where it stabilizes the conformation of the head with respect to the body. The sequence is that of Small ribosomal subunit protein uS5 from Frankia casuarinae (strain DSM 45818 / CECT 9043 / HFP020203 / CcI3).